We begin with the raw amino-acid sequence, 2287 residues long: Serine/threonine-protein kinase MEC1 (2287 aa).

One can recognise an FAT domain in the interval 1310 to 1864; it reads TLAKKSLETD…LWYISILLNS (555 aa). The PI3K/PI4K catalytic domain occupies 1968 to 2271; sequence FSSQYMVFNS…QVEALTQESC (304 aa). The G-loop stretch occupies residues 1974 to 1980; that stretch reads VFNSLKK. Residues 2140–2148 are catalytic loop; it reads GLGDRHCEN. Positions 2160 to 2184 are activation loop; sequence HVDFDCLFEKGKKLPVPEIVPFRLT. The region spanning 2255–2287 is the FATC domain; the sequence is LALSVSGQVEALTQESCSVENLSKMYIGWLPFW.

It belongs to the PI3/PI4-kinase family. ATM subfamily.

It is found in the nucleus. The enzyme catalyses L-seryl-[protein] + ATP = O-phospho-L-seryl-[protein] + ADP + H(+). It carries out the reaction L-threonyl-[protein] + ATP = O-phospho-L-threonyl-[protein] + ADP + H(+). Serine/threonine protein kinase which activates checkpoint signaling upon genotoxic stresses such as ionizing radiation (IR), ultraviolet light (UV), or DNA replication stalling, thereby acting as a DNA damage sensor. Recognizes the substrate consensus sequence [ST]-Q. Recruited to DNA lesions in order to initiate the DNA repair by homologous recombination. Phosphorylates histone H2A to form H2AS128ph (gamma-H2A) at sites of DNA damage, also involved in the regulation of DNA damage response mechanism. Required for cell growth and meiotic recombination. In Kluyveromyces lactis (strain ATCC 8585 / CBS 2359 / DSM 70799 / NBRC 1267 / NRRL Y-1140 / WM37) (Yeast), this protein is Serine/threonine-protein kinase MEC1 (MEC1).